Reading from the N-terminus, the 160-residue chain is Cyclic pyranopterin monophosphate synthase (160 aa).

Substrate is bound by residues 75 to 77 (LCH) and 113 to 114 (ME). Asp-128 is an active-site residue.

This sequence belongs to the MoaC family. Homohexamer; trimer of dimers.

The enzyme catalyses (8S)-3',8-cyclo-7,8-dihydroguanosine 5'-triphosphate = cyclic pyranopterin phosphate + diphosphate. It participates in cofactor biosynthesis; molybdopterin biosynthesis. Functionally, catalyzes the conversion of (8S)-3',8-cyclo-7,8-dihydroguanosine 5'-triphosphate to cyclic pyranopterin monophosphate (cPMP). In Methylobacterium sp. (strain 4-46), this protein is Cyclic pyranopterin monophosphate synthase.